A 286-amino-acid chain; its full sequence is 2-oxoglutarate synthase subunit KorB (286 aa).

In terms of assembly, heterotetramer of the KorA, KorB, KorC and KorD subunits.

It catalyses the reaction 2 oxidized [2Fe-2S]-[ferredoxin] + 2-oxoglutarate + CoA = succinyl-CoA + 2 reduced [2Fe-2S]-[ferredoxin] + CO2 + H(+). The protein is 2-oxoglutarate synthase subunit KorB (korB) of Methanothermobacter thermautotrophicus (strain ATCC 29096 / DSM 1053 / JCM 10044 / NBRC 100330 / Delta H) (Methanobacterium thermoautotrophicum).